Here is a 342-residue protein sequence, read N- to C-terminus: Olfactory receptor 51F2 (342 aa).

Over Met1–Tyr39 the chain is Extracellular. N-linked (GlcNAc...) asparagine glycosylation occurs at Asn17. Residues Trp40 to Leu60 form a helical membrane-spanning segment. The Cytoplasmic portion of the chain corresponds to Phe61–Ser68. Residues Leu69 to Leu89 form a helical membrane-spanning segment. Topologically, residues Cys90–Ala113 are extracellular. An intrachain disulfide couples Cys111 to Cys203. A helical membrane pass occupies residues Gln114–Phe134. Over Asp135 to Ala153 the chain is Cytoplasmic. A helical membrane pass occupies residues Arg154–Met174. The Extracellular segment spans residues Leu175–Ser210. A helical transmembrane segment spans residues Ile211 to Ser231. Residues Tyr232–Ala251 lie on the Cytoplasmic side of the membrane. The helical transmembrane segment at Phe252–Leu272 threads the bilayer. Residues Ser273 to His287 lie on the Extracellular side of the membrane. Residues Ile288 to Val308 traverse the membrane as a helical segment. At Lys309–Glu342 the chain is on the cytoplasmic side.

This sequence belongs to the G-protein coupled receptor 1 family.

The protein localises to the cell membrane. Odorant receptor. The sequence is that of Olfactory receptor 51F2 (OR51F2) from Homo sapiens (Human).